The chain runs to 964 residues: Translation initiation factor IF-2 (964 aa).

The span at 105–119 (AALAESEASEAAPVV) shows a compositional bias: low complexity. Disordered stretches follow at residues 105–133 (AALA…EHRR) and 146–378 (KARQ…PTEP). 4 stretches are compositionally biased toward basic and acidic residues: residues 123 to 133 (EVARREEEHRR), 146 to 183 (KARQ…KAEE), 197 to 253 (EAPR…RAIR), and 266 to 278 (PAER…KKAE). Residues 288–302 (KPAGEARPAAAKKPA) show a composition bias toward low complexity. Residues 303–313 (APAPAAAPAPG) show a composition bias toward pro residues. Positions 464–633 (TRPPVVTVMG…LLQAEVLELK (170 aa)) constitute a tr-type G domain. The tract at residues 473 to 480 (GHVDHGKT) is G1. A GTP-binding site is contributed by 473–480 (GHVDHGKT). Residues 498–502 (GITQH) form a G2 region. The segment at 519–522 (DTPG) is G3. Residues 519–523 (DTPGH) and 573–576 (TKVD) each bind GTP. A G4 region spans residues 573–576 (TKVD). Residues 609–611 (SAK) form a G5 region.

The protein belongs to the TRAFAC class translation factor GTPase superfamily. Classic translation factor GTPase family. IF-2 subfamily.

It is found in the cytoplasm. One of the essential components for the initiation of protein synthesis. Protects formylmethionyl-tRNA from spontaneous hydrolysis and promotes its binding to the 30S ribosomal subunits. Also involved in the hydrolysis of GTP during the formation of the 70S ribosomal complex. This is Translation initiation factor IF-2 from Ralstonia pickettii (strain 12J).